Here is an 888-residue protein sequence, read N- to C-terminus: Alanine--tRNA ligase (888 aa).

His571, His575, Cys674, and His678 together coordinate Zn(2+).

The protein belongs to the class-II aminoacyl-tRNA synthetase family. Zn(2+) is required as a cofactor.

The protein resides in the cytoplasm. It carries out the reaction tRNA(Ala) + L-alanine + ATP = L-alanyl-tRNA(Ala) + AMP + diphosphate. Catalyzes the attachment of alanine to tRNA(Ala) in a two-step reaction: alanine is first activated by ATP to form Ala-AMP and then transferred to the acceptor end of tRNA(Ala). Also edits incorrectly charged Ser-tRNA(Ala) and Gly-tRNA(Ala) via its editing domain. In Nocardia farcinica (strain IFM 10152), this protein is Alanine--tRNA ligase.